The chain runs to 494 residues: Nuclear distribution protein PAC1 (494 aa).

The LisH domain maps to Gln14–Arg46. Residues Asn90 to Leu123 are a coiled coil. 7 WD repeats span residues Asn153 to Ala192, Ser196 to Gln244, Gly251 to Thr292, Pro295 to Thr334, His347 to His395, Gly415 to Glu454, and His457 to Phe492.

Belongs to the WD repeat LIS1/nudF family. Self-associates. Interacts with NDL1 and dynein.

It is found in the cytoplasm. The protein localises to the cytoskeleton. The protein resides in the spindle pole. In terms of biological role, positively regulates the activity of the minus-end directed microtubule motor protein dynein. Plays a central role in positioning the mitotic spindle at the bud neck during cell division. Targets cytoplasmic dynein to microtubule plus ends, thereby promoting dynein-mediated microtubule sliding along the bud cortex and consequently the movement of the mitotic spindle to the bud neck. In Saccharomyces cerevisiae (strain YJM789) (Baker's yeast), this protein is Nuclear distribution protein PAC1.